The chain runs to 487 residues: 3-octaprenyl-4-hydroxybenzoate carboxy-lyase (487 aa).

Asparagine 172 serves as a coordination point for Mn(2+). Residues 175-177, 189-191, and 194-195 contribute to the prenylated FMN site; these read IYR, RWL, and RG. Residue glutamate 238 coordinates Mn(2+). Aspartate 287 serves as the catalytic Proton donor.

It belongs to the UbiD family. Homohexamer. Prenylated FMN is required as a cofactor. The cofactor is Mn(2+).

The protein localises to the cell membrane. The enzyme catalyses a 4-hydroxy-3-(all-trans-polyprenyl)benzoate + H(+) = a 2-(all-trans-polyprenyl)phenol + CO2. It functions in the pathway cofactor biosynthesis; ubiquinone biosynthesis. Functionally, catalyzes the decarboxylation of 3-octaprenyl-4-hydroxy benzoate to 2-octaprenylphenol, an intermediate step in ubiquinone biosynthesis. In Nitrosococcus oceani (strain ATCC 19707 / BCRC 17464 / JCM 30415 / NCIMB 11848 / C-107), this protein is 3-octaprenyl-4-hydroxybenzoate carboxy-lyase.